The following is a 540-amino-acid chain: Esterase B1 (540 aa).

C68 and C81 are disulfide-bonded. S191 (acyl-ester intermediate) is an active-site residue. Active-site charge relay system residues include E324 and H442. N-linked (GlcNAc...) asparagine glycosylation occurs at N452.

The protein belongs to the type-B carboxylesterase/lipase family.

The enzyme catalyses a carboxylic ester + H2O = an alcohol + a carboxylate + H(+). In terms of biological role, overproduction of nonspecific esterases is a common mechanism of resistance to organophosphate insecticides. The chain is Esterase B1 (B1) from Culex pipiens (House mosquito).